The sequence spans 131 residues: CLAVATA3/ESR (CLE)-related protein ESR1 (131 aa).

Positions 1-26 are cleaved as a signal peptide; the sequence is MASRMGMVAIVSLFVCALAASTSVNA. Residues 49 to 131 form a disordered region; the sequence is RQQQQGGFIG…IGPPPLSDRY (83 aa). Hydroxyproline is present on residues Pro-81 and Pro-84. An O-linked (Ara...) hydroxyproline glycan is attached at Pro-84.

It belongs to the CLV3/ESR signal peptide family. Post-translationally, the O-glycosylation (arabinosylation) of the hydroxyproline Pro-84 enhances binding affinity of the ESR1p peptide for its receptor. Seed endosperm.

The protein resides in the secreted. The protein localises to the extracellular space. Extracellular signal peptide that regulates cell fate. This Zea mays (Maize) protein is CLAVATA3/ESR (CLE)-related protein ESR1.